The sequence spans 481 residues: Guanine nucleotide exchange factor C9orf72 homolog (481 aa).

In terms of domain architecture, uDENN C9ORF72-type spans 23-194 (SPLLAATFAY…ELLASMKSHS (172 aa)). Residues 200 to 343 (DIADTVLNDD…SELTAFWRAT (144 aa)) enclose the cDENN C9ORF72-type domain. One can recognise a dDENN C9ORF72-type domain in the interval 370 to 464 (VLHRDTLVKA…IKPGLHSFIF (95 aa)). The interval 461 to 481 (SFIFGRPFYTSVQERDVLMTF) is required for the homodimerization of the C9orf72-SMCR8 complex.

Component of the C9orf72-SMCR8 complex, at least composed of C9orf72, SMCR8 and WDR41. The complex is formed of two protomers, each individually consisting of one molecule each of C9orf72, SMCR8 and WDR41. The protomers homodimerize via an interaction between C9orf72 (via C-terminus) and SMCR8 (via N-terminus). Within each protomer SMCR8 (via DENN domain) acts as a bridging protein between WDR41 (via C-terminus and N-terminus) and C9orf72 (via C-terminus). The C9orf72-SMCR8 complex associates with the ULK1/ATG1 kinase complex. Interacts with ULK1/ATG1 kinase complex members ULK1, ATG13 and RB1CC1. Interacts with SMCR8; the interaction is direct. Interacts with HNRNPA1, HNRNPA2B1 and UBQLN2. Interacts with small Rab GTPase RAB1A; the interaction mediates recruitment of RAB1A to the ULK1/ATG1 kinase complex. Also interacts with small Rab GTPase RAB7A. Interacts with cofilin. Interacts with GTP-binding proteins ARF1 and ARF6. Interacts with the DLG4/PSD-95. Interacts with CARM1 (via PH domain-like fold). Interacts with RAB39A and RAB39B (in GDP-bound forms); functions as GEF for RAB39A and RAB39B. As to expression, expressed in postnatal cerebellum and cortex (at protein level). Neuronal expression is detected in several regions of the adult brain and spinal cord. Prominent expression also observed in embryonic and early postnatal neurons including retinal ganglion cells, sensory neurons in the olfactory epithelium and in dorsal root ganglia, and spinal motor neurons. Expressed in the developing cerebral cortex, cerebellum, olfactory bulb, hippocampus and spinal cord in the embryo and in P0 cortical neurons and astrocytes. Also expressed in non-neuronal tissues such as kidney and tooth. In the spleen, highly expressed in myeloid cells compared to B cell and T cell populations where expression is much lower. In the brain, highly expressed in microglia. Expressed in the forebrain, including in the glomerular layer of the olfactory bulb (at protein level).

The protein localises to the nucleus. The protein resides in the cytoplasm. It localises to the P-body. Its subcellular location is the stress granule. It is found in the endosome. The protein localises to the lysosome. The protein resides in the cytoplasmic vesicle. It localises to the autophagosome. Its subcellular location is the autolysosome. It is found in the secreted. The protein localises to the cell projection. The protein resides in the axon. It localises to the growth cone. Its subcellular location is the perikaryon. It is found in the dendrite. The protein localises to the presynapse. The protein resides in the postsynapse. Its function is as follows. Acts as a guanine-nucleotide releasing factor (GEF) for Rab GTPases by promoting the conversion of inactive RAB-GDP to the active form RAB-GTP. Acts as a GEF for RAB39A which enables HOPS-mediated autophagosome-lysosome membrane tethering and fusion in mammalian autophagy. Component of the C9orf72-SMCR8 complex where both subunits display GEF activity and that regulates autophagy. As part of the C9orf72-SMCR8-WDR41 (CSW) complex, functions as GEF for RAB8A, and RAB39B, thereby promoting autophagosome maturation. As part of the C9orf72-SMCR8 complex, also functions as GTPase activating protein (GAP) for RAB8A and RAB11A in vitro. The C9orf72-SMCR8 complex also acts as a regulator of autophagy initiation by interacting with the ULK1/ATG1 kinase complex and modulating its protein kinase activity. Promotes initiation of autophagy by regulating the RAB1A-dependent trafficking of the ULK1/ATG1 kinase complex to the phagophore which leads to autophagosome formation. Acts as a regulator of mTORC1 signaling by promoting phosphorylation of mTORC1 substrates. Plays a role in endosomal trafficking. May be involved in regulating the maturation of phagosomes to lysosomes. Promotes the lysosomal localization and lysosome-mediated degradation of CARM1 which leads to inhibition of starvation-induced lipid metabolism. Regulates actin dynamics in motor neurons by inhibiting the GTP-binding activity of ARF6, leading to ARF6 inactivation. This reduces the activity of the LIMK1 and LIMK2 kinases which are responsible for phosphorylation and inactivation of CFL1/cofilin, leading to cofilin activation. Positively regulates axon extension and axon growth cone size in spinal motor neurons. Required for SMCR8 protein expression and localization at pre- and post-synaptic compartments in the forebrain, also regulates protein abundance of RAB3A and GRIA1/GLUR1 in post-synaptic compartments in the forebrain and hippocampus. Plays a role within the hematopoietic system in restricting inflammation and the development of autoimmunity. The sequence is that of Guanine nucleotide exchange factor C9orf72 homolog from Mus musculus (Mouse).